Consider the following 222-residue polypeptide: GTP-binding nuclear protein Ran-4 (222 aa).

The 165-residue stretch at 10–174 (DLPTFKLLIV…LYLARRIAGD (165 aa)) folds into the Small GTPase Ran-type domain. Position 21–28 (21–28 (DGGTGKTT)) interacts with GTP. Residues 40-48 (HNTEPTLGV) form a switch-I region. GTP is bound by residues Gly-71, 125–128 (NKVD), and 153–155 (SAK). A switch-II region spans residues 71–87 (GQEKYSGLKDAYYIHGQ).

It belongs to the small GTPase superfamily. Ran family. In terms of assembly, found in a nuclear export complex with RanGTP, exportin and pre-miRNA.

The protein resides in the nucleus. GTP-binding protein involved in nucleocytoplasmic transport. Required for the import of protein into the nucleus and also for RNA export. Involved in chromatin condensation and control of cell cycle. The protein is GTP-binding nuclear protein Ran-4 (RAN4) of Arabidopsis thaliana (Mouse-ear cress).